The following is a 127-amino-acid chain: Fluoride-specific ion channel FluC (127 aa).

A run of 4 helical transmembrane segments spans residues T4–V24, L35–F55, T71–L91, and V103–W123. Residues G75 and T78 each contribute to the Na(+) site.

It belongs to the fluoride channel Fluc/FEX (TC 1.A.43) family.

The protein resides in the cell inner membrane. The catalysed reaction is fluoride(in) = fluoride(out). Its activity is regulated as follows. Na(+) is not transported, but it plays an essential structural role and its presence is essential for fluoride channel function. Fluoride-specific ion channel. Important for reducing fluoride concentration in the cell, thus reducing its toxicity. The polypeptide is Fluoride-specific ion channel FluC (Pectobacterium carotovorum subsp. carotovorum (strain PC1)).